The primary structure comprises 417 residues: RH-like protein IA (417 aa).

Helical transmembrane passes span 12-32, 44-64, 77-97, 125-145, 172-192, 203-223, 238-258, 265-285, 287-307, 331-351, and 358-378; these read CLPLCALTLEAALILLFYFFT, LVASYQVGQDLTVMAAIGFGF, VAFSLFMLALGVQWAILLDGF, ISVDAVLGKVNLVQLVVMVLV, IYVFAAYFGLSVAWCLPKPLP, TIPSLSAMLGALFLWMFWPSF, VFNTYYAVAVSVVTAISGSSL, ISMSYMHNAVLAGGVAVGTSC, LITSPWLAMVLGLVAGLISIG, NFSLLGLLGEIIYIVLLVHHT, and MIGFQVLLRIGEFSLATTIAL.

It belongs to the ammonium transporter (TC 2.A.49) family. Rh subfamily.

The protein localises to the membrane. In terms of biological role, may be part of an oligomeric complex which is likely to have a transport or channel function in the erythrocyte membrane. The polypeptide is RH-like protein IA (Pan troglodytes (Chimpanzee)).